A 268-amino-acid polypeptide reads, in one-letter code: 3-methyl-2-oxobutanoate hydroxymethyltransferase (268 aa).

2 residues coordinate Mg(2+): D44 and D83. 3-methyl-2-oxobutanoate contacts are provided by residues 44-45, D83, and K113; that span reads DS. E115 serves as a coordination point for Mg(2+). The active-site Proton acceptor is E183.

The protein belongs to the PanB family. In terms of assembly, homodecamer; pentamer of dimers. The cofactor is Mg(2+).

The protein localises to the cytoplasm. The catalysed reaction is 3-methyl-2-oxobutanoate + (6R)-5,10-methylene-5,6,7,8-tetrahydrofolate + H2O = 2-dehydropantoate + (6S)-5,6,7,8-tetrahydrofolate. Its pathway is cofactor biosynthesis; (R)-pantothenate biosynthesis; (R)-pantoate from 3-methyl-2-oxobutanoate: step 1/2. Functionally, catalyzes the reversible reaction in which hydroxymethyl group from 5,10-methylenetetrahydrofolate is transferred onto alpha-ketoisovalerate to form ketopantoate. In Leptospira biflexa serovar Patoc (strain Patoc 1 / Ames), this protein is 3-methyl-2-oxobutanoate hydroxymethyltransferase.